The following is a 204-amino-acid chain: Outer-membrane lipoprotein carrier protein (204 aa).

The N-terminal stretch at 1–21 (MKKYLNLTALLLVGISNVTWA) is a signal peptide.

The protein belongs to the LolA family. Monomer.

It is found in the periplasm. Functionally, participates in the translocation of lipoproteins from the inner membrane to the outer membrane. Only forms a complex with a lipoprotein if the residue after the N-terminal Cys is not an aspartate (The Asp acts as a targeting signal to indicate that the lipoprotein should stay in the inner membrane). The protein is Outer-membrane lipoprotein carrier protein of Histophilus somni (strain 129Pt) (Haemophilus somnus).